A 213-amino-acid polypeptide reads, in one-letter code: Ribonuclease HII (213 aa).

One can recognise an RNase H type-2 domain in the interval 18-213 (GLYAGVDEVG…RPVKERLAKN (196 aa)). A divalent metal cation is bound by residues D24, E25, and D116.

It belongs to the RNase HII family. Mn(2+) serves as cofactor. The cofactor is Mg(2+).

It localises to the cytoplasm. The catalysed reaction is Endonucleolytic cleavage to 5'-phosphomonoester.. Its function is as follows. Endonuclease that specifically degrades the RNA of RNA-DNA hybrids. This chain is Ribonuclease HII, found in Shewanella sediminis (strain HAW-EB3).